Reading from the N-terminus, the 169-residue chain is NADH-quinone oxidoreductase subunit I (169 aa).

2 consecutive 4Fe-4S ferredoxin-type domains span residues 61–90 (RRYDNGEERCIACKLCEAVCPALAITIESE) and 100–129 (TRYDIDLTKCIFCGFCEESCPVDSIVETHI). Residues C70, C73, C76, C80, C109, C112, C115, and C119 each coordinate [4Fe-4S] cluster.

Belongs to the complex I 23 kDa subunit family. As to quaternary structure, NDH-1 is composed of 14 different subunits. Subunits NuoA, H, J, K, L, M, N constitute the membrane sector of the complex. It depends on [4Fe-4S] cluster as a cofactor.

Its subcellular location is the cell inner membrane. It catalyses the reaction a quinone + NADH + 5 H(+)(in) = a quinol + NAD(+) + 4 H(+)(out). NDH-1 shuttles electrons from NADH, via FMN and iron-sulfur (Fe-S) centers, to quinones in the respiratory chain. The immediate electron acceptor for the enzyme in this species is believed to be ubiquinone. Couples the redox reaction to proton translocation (for every two electrons transferred, four hydrogen ions are translocated across the cytoplasmic membrane), and thus conserves the redox energy in a proton gradient. This chain is NADH-quinone oxidoreductase subunit I, found in Verminephrobacter eiseniae (strain EF01-2).